The chain runs to 1774 residues: Receptor-mediated endocytosis protein 6 homolog (1774 aa).

The Ras-GAP domain maps to 157–396 (ELLLKLLREL…EDVVAILPQQ (240 aa)). Disordered regions lie at residues 444–480 (IPKQ…NNRS), 517–564 (PLAN…PAPT), 661–727 (AAHS…HHHG), 784–811 (ENTL…RNFS), 869–947 (AEID…EDSA), 983–1102 (ESSF…EEQP), 1115–1142 (QEEQ…SMEQ), and 1214–1342 (RAGA…GGRS). Low complexity-rich tracts occupy residues 519–533 (ANGQ…SASN) and 540–557 (SSHS…AAPA). Residues 674–683 (QQERDVHENE) show a composition bias toward basic and acidic residues. Residues 688–713 (DMVSANVSGRGTPNISGRDTPSSQVT) are compositionally biased toward polar residues. Over residues 794–809 (RGGDRGDRGDRDRDRN) the composition is skewed to basic and acidic residues. Gly residues predominate over residues 887-905 (PGSGGGAGVPEAGGGGGVV). Positions 929-944 (DPDRERLRNGSERSQE) are enriched in basic and acidic residues. A compositionally biased stretch (polar residues) spans 1011–1027 (MRRQTSAESSISNQSLN). The span at 1038-1047 (LAKHHHHHQH) shows a compositional bias: basic residues. The segment covering 1048-1060 (RDRDRDRDRDRDH) has biased composition (basic and acidic residues). Residues 1061-1076 (REHHHKSAALKKKKHQ) are compositionally biased toward basic residues. The span at 1077-1087 (EHKEHQHRDLI) shows a compositional bias: basic and acidic residues. Residues 1091 to 1101 (DCSEDKDEEEQ) are compositionally biased toward acidic residues. Positions 1115–1125 (QEEQQQQQQQQ) are enriched in low complexity. The segment covering 1246-1291 (SADKEQQPYRDRERERDRERDRERDRDRERDRDRDRDRDRDREHHS) has biased composition (basic and acidic residues). Over residues 1310–1335 (SSSSKNNAIAIAAPSSINPNPSPSSA) the composition is skewed to low complexity. Residues 1516 to 1546 (RHRQQLLLRSEQLEQLEVRLRSEARSCQRCL) adopt a coiled-coil conformation. A VPS9 domain is found at 1635–1774 (VSRDTVLSAH…KFIKTMDYLD (140 aa)).

This sequence belongs to the GAPVD1 family.

Its subcellular location is the membrane. Acts both as a GTPase-activating protein (GAP) and a guanine nucleotide exchange factor (GEF), and participates in endocytosis. The protein is Receptor-mediated endocytosis protein 6 homolog of Drosophila pseudoobscura pseudoobscura (Fruit fly).